Here is a 415-residue protein sequence, read N- to C-terminus: uncharacterized protein (415 aa).

3 disordered regions span residues 39–77 (FLPP…RPIH), 220–247 (AEDK…HPLT), and 346–415 (VTLN…NGSK). 3 stretches are compositionally biased toward basic and acidic residues: residues 220 to 238 (AEDK…ESKN), 365 to 380 (DVNK…DKHM), and 400 to 415 (SKTE…NGSK).

This is an uncharacterized protein from Rattus norvegicus (Rat).